The primary structure comprises 779 residues: Polyribonucleotide nucleotidyltransferase (779 aa).

Positions 490 and 496 each coordinate Mg(2+). Residues 557-618 (PHILSLKINP…EAVKARIEAV (62 aa)) enclose the KH domain. In terms of domain architecture, S1 motif spans 625-693 (GEEFEGTVVK…DRGKIDLIRP (69 aa)). Residues 699-752 (VPLREPRAPRGGDRGPRRDSDRGGDRGPRREFSDRGPRPEGARSERPEGQRTER) are compositionally biased toward basic and acidic residues. The tract at residues 699–779 (VPLREPRAPR…AAPVFPRRED (81 aa)) is disordered. Residues 757–767 (PATQESSQSSD) show a composition bias toward polar residues.

The protein belongs to the polyribonucleotide nucleotidyltransferase family. Mg(2+) is required as a cofactor.

Its subcellular location is the cytoplasm. The enzyme catalyses RNA(n+1) + phosphate = RNA(n) + a ribonucleoside 5'-diphosphate. Functionally, involved in mRNA degradation. Catalyzes the phosphorolysis of single-stranded polyribonucleotides processively in the 3'- to 5'-direction. This chain is Polyribonucleotide nucleotidyltransferase, found in Deinococcus radiodurans (strain ATCC 13939 / DSM 20539 / JCM 16871 / CCUG 27074 / LMG 4051 / NBRC 15346 / NCIMB 9279 / VKM B-1422 / R1).